The chain runs to 851 residues: DNA mismatch repair protein MutS (851 aa).

Gly-602–Ser-609 lines the ATP pocket.

It belongs to the DNA mismatch repair MutS family.

In terms of biological role, this protein is involved in the repair of mismatches in DNA. It is possible that it carries out the mismatch recognition step. This protein has a weak ATPase activity. The sequence is that of DNA mismatch repair protein MutS from Streptococcus pyogenes serotype M6 (strain ATCC BAA-946 / MGAS10394).